Reading from the N-terminus, the 108-residue chain is MGVQVETITEGDGRTFPKKGQTVVVHYVGSLENGKKFDSSRDRNKPFKFIIGRCEVIRGWEEGVAQMSVGQRARLTCSPDFAYGATGHPGIIPPNATLTFDVELLRLE.

Residues 20-108 enclose the PPIase FKBP-type domain; it reads GQTVVVHYVG…TFDVELLRLE (89 aa).

It belongs to the FKBP-type PPIase family. FKBP1 subfamily.

It localises to the cytoplasm. The catalysed reaction is [protein]-peptidylproline (omega=180) = [protein]-peptidylproline (omega=0). Inhibited by both FK506 and rapamycin. Keeps in an inactive conformation TGFBR1, the TGF-beta type I serine/threonine kinase receptor, preventing TGF-beta receptor activation in absence of ligand. May modulate the RYR1 calcium channel activity. PPIases accelerate the folding of proteins. It catalyzes the cis-trans isomerization of proline imidic peptide bonds in oligopeptides. The sequence is that of Peptidyl-prolyl cis-trans isomerase FKBP1A (fkbp1a) from Xenopus laevis (African clawed frog).